Here is a 61-residue protein sequence, read N- to C-terminus: UPF0434 protein Pput_3813 (61 aa).

This sequence belongs to the UPF0434 family.

The polypeptide is UPF0434 protein Pput_3813 (Pseudomonas putida (strain ATCC 700007 / DSM 6899 / JCM 31910 / BCRC 17059 / LMG 24140 / F1)).